A 117-amino-acid polypeptide reads, in one-letter code: Immunoglobulin kappa variable 1-39 (117 aa).

The N-terminal stretch at 1 to 22 (MDMRVPAQLLGLLLLWLRGARC) is a signal peptide. The interval 23 to 45 (DIQMTQSPSSLSASVGDRVTITC) is framework-1. The Ig-like domain maps to 24–117 (IQMTQSPSSL…YYCQQSYSTP (94 aa)). C45 and C110 are oxidised to a cystine. A complementarity-determining-1 region spans residues 46-56 (RASQSISSYLN). The segment at 57–71 (WYQQKPGKAPKLLIY) is framework-2. The complementarity-determining-2 stretch occupies residues 72–78 (AASSLQS). The framework-3 stretch occupies residues 79 to 110 (GVPSRFSGSGSGTDFTLTISSLQPEDFATYYC). Residues 111–117 (QQSYSTP) are complementarity-determining-3.

In terms of assembly, immunoglobulins are composed of two identical heavy chains and two identical light chains; disulfide-linked.

It is found in the secreted. Its subcellular location is the cell membrane. Functionally, v region of the variable domain of immunoglobulin light chains that participates in the antigen recognition. Immunoglobulins, also known as antibodies, are membrane-bound or secreted glycoproteins produced by B lymphocytes. In the recognition phase of humoral immunity, the membrane-bound immunoglobulins serve as receptors which, upon binding of a specific antigen, trigger the clonal expansion and differentiation of B lymphocytes into immunoglobulins-secreting plasma cells. Secreted immunoglobulins mediate the effector phase of humoral immunity, which results in the elimination of bound antigens. The antigen binding site is formed by the variable domain of one heavy chain, together with that of its associated light chain. Thus, each immunoglobulin has two antigen binding sites with remarkable affinity for a particular antigen. The variable domains are assembled by a process called V-(D)-J rearrangement and can then be subjected to somatic hypermutations which, after exposure to antigen and selection, allow affinity maturation for a particular antigen. This Homo sapiens (Human) protein is Immunoglobulin kappa variable 1-39.